The chain runs to 1035 residues: Cell-division control histidine kinase PdhS (1035 aa).

The interval Met1–Asp613 is important for polar localization. A disordered region spans residues Gln500–Glu533. Positions Ala614–Asp1035 are interaction with DivK. The PAS domain maps to His659–Val730. Residues Arg802 to Arg1031 form the Histidine kinase domain. His805 carries the phosphohistidine; by autocatalysis modification.

In terms of assembly, interacts with DivK.

The protein resides in the cytoplasm. It carries out the reaction ATP + protein L-histidine = ADP + protein N-phospho-L-histidine.. Its function is as follows. Functions as a polar differentiation marker. Essential protein that, by localizing in the old pole of dividing cells, controls cell division and maturation, probably through control of DivK phosphorylation status and cellular distribution, which in turn regulates CtrA, a transcriptional regulator of the minB operon. The asymmetrical localization of this protein is probably required for cells to enter a new division cycle. This is Cell-division control histidine kinase PdhS (pdhS) from Brucella ovis (strain ATCC 25840 / 63/290 / NCTC 10512).